Here is a 188-residue protein sequence, read N- to C-terminus: Large ribosomal subunit protein bL35m (188 aa).

The protein belongs to the bacterial ribosomal protein bL35 family.

The protein localises to the mitochondrion. This Bos taurus (Bovine) protein is Large ribosomal subunit protein bL35m (MRPL35).